Reading from the N-terminus, the 626-residue chain is Alpha terpineol synthase, chloroplastic (626 aa).

A chloroplast-targeting transit peptide spans 1–38 (MALLSVAPLASKSRLHKTLITSAHHLKPSPTTIPTLPV). Mg(2+)-binding residues include aspartate 377, aspartate 381, and aspartate 529. The short motif at 377–381 (DDIYD) is the DDXXD motif element.

The protein belongs to the terpene synthase family. Tpsd subfamily. Mg(2+) serves as cofactor. The cofactor is Mn(2+).

It is found in the plastid. Its subcellular location is the chloroplast. It carries out the reaction (2E)-geranyl diphosphate + H2O = (S)-alpha-terpineol + diphosphate. It catalyses the reaction (2E)-geranyl diphosphate + H2O = (R)-alpha-terpineol + diphosphate. The enzyme catalyses (2E)-geranyl diphosphate + H2O = (2E)-geraniol + diphosphate. The catalysed reaction is (2E)-geranyl diphosphate = terpinolene + diphosphate. It carries out the reaction (2E)-geranyl diphosphate = (4S)-limonene + diphosphate. It participates in terpene metabolism; oleoresin biosynthesis. Its pathway is secondary metabolite biosynthesis; terpenoid biosynthesis. Monoterpene synthase (TPS) involved in the biosynthesis of monoterpene natural products included in conifer oleoresin secretions and volatile emissions; these compounds contribute to biotic and abiotic stress defense against herbivores and pathogens. Catalyzes the conversion of (2E)-geranyl diphosphate (GPP) to (-)-alpha-terpineol, (+)-alpha-terpineol and terpin-4-ol, and, to a lower extent, to geraniol, terpinolene and (-)-limonene. The sequence is that of Alpha terpineol synthase, chloroplastic from Pinus banksiana (Jack pine).